The following is a 153-amino-acid chain: SsrA-binding protein (153 aa).

The segment at 129 to 153 (KREDMKKKDQSREMAQALREKSKSH) is disordered.

Belongs to the SmpB family.

It is found in the cytoplasm. Functionally, required for rescue of stalled ribosomes mediated by trans-translation. Binds to transfer-messenger RNA (tmRNA), required for stable association of tmRNA with ribosomes. tmRNA and SmpB together mimic tRNA shape, replacing the anticodon stem-loop with SmpB. tmRNA is encoded by the ssrA gene; the 2 termini fold to resemble tRNA(Ala) and it encodes a 'tag peptide', a short internal open reading frame. During trans-translation Ala-aminoacylated tmRNA acts like a tRNA, entering the A-site of stalled ribosomes, displacing the stalled mRNA. The ribosome then switches to translate the ORF on the tmRNA; the nascent peptide is terminated with the 'tag peptide' encoded by the tmRNA and targeted for degradation. The ribosome is freed to recommence translation, which seems to be the essential function of trans-translation. This is SsrA-binding protein from Geobacter sulfurreducens (strain ATCC 51573 / DSM 12127 / PCA).